Here is a 117-residue protein sequence, read N- to C-terminus: Acidic phospholipase A2 PA-1G (117 aa).

7 cysteine pairs are disulfide-bonded: Cys-11/Cys-71, Cys-27/Cys-117, Cys-29/Cys-45, Cys-44/Cys-98, Cys-51/Cys-91, Cys-60/Cys-84, and Cys-78/Cys-89. Ca(2+) contacts are provided by Tyr-28, Gly-30, and Gly-32. His-48 is a catalytic residue. Asp-49 provides a ligand contact to Ca(2+). Residue Asp-92 is part of the active site.

This sequence belongs to the phospholipase A2 family. Group I subfamily. D49 sub-subfamily. Ca(2+) serves as cofactor. As to expression, expressed by the venom gland.

It localises to the secreted. It carries out the reaction a 1,2-diacyl-sn-glycero-3-phosphocholine + H2O = a 1-acyl-sn-glycero-3-phosphocholine + a fatty acid + H(+). In terms of biological role, PLA2 catalyzes the calcium-dependent hydrolysis of the 2-acyl groups in 3-sn-phosphoglycerides. The chain is Acidic phospholipase A2 PA-1G from Pseudechis australis (Mulga snake).